Consider the following 483-residue polypeptide: ATP-dependent RNA helicase DDX25 (483 aa).

A Phosphothreonine modification is found at threonine 49. Residues 61 to 74 (LAANSLLNKLIRQS) carry the Nuclear export signal motif. The Q motif motif lies at 97–125 (KTFEELRLKEELLKGIYAMGFNRPSKIQE). Positions 100–114 (EELRLKEELLKGIYA) match the Nuclear localization signal motif. Residues 130–300 (MMLAHPPQNL…ERIIPDPNVI (171 aa)) form the Helicase ATP-binding domain. 143–150 (SQSGTGKT) contributes to the ATP binding site. Residues 247-250 (DEAD) carry the DEAD box motif. Positions 311–478 (NIRQYYVLCE…QLDPEDMDEI (168 aa)) constitute a Helicase C-terminal domain.

This sequence belongs to the DEAD box helicase family. In terms of processing, phosphorylated on threonine residues. The phosphorylated form is found in the cytoplasm but not in the nucleus. Isoform 1 is expressed in germ cells. Isoform 2 is highly expressed in Leydig cells and weakly expressed in the pituitary and hypothalamus. Isoform 3 is weakly expressed only in germ cells.

The protein resides in the cytoplasm. It localises to the nucleus. It catalyses the reaction ATP + H2O = ADP + phosphate + H(+). Its function is as follows. ATP-dependent RNA helicase. Required for mRNA export and translation regulation during spermatid development. In Rattus norvegicus (Rat), this protein is ATP-dependent RNA helicase DDX25 (Ddx25).